The primary structure comprises 294 residues: Transcription factor nsy-7 (294 aa).

Disordered stretches follow at residues 43-119 and 167-191; these read CNLR…TPDL and LRLP…DSPL. 2 stretches are compositionally biased toward polar residues: residues 52-63 and 81-115; these read DQPTTSSNSVKE and RRQS…SNDP. A DNA-binding region (homeobox; atypical) is located at residues 192–232; the sequence is QTRMKGWQREYIKEVIKDSHYPTEEELRDIEQKCDLSRKQI. The disordered stretch occupies residues 238-274; sequence KRLTNPNRKPRVNHHDEKRKEQEERDSLADPDDDMIN. Residues 250 to 265 show a composition bias toward basic and acidic residues; that stretch reads NHHDEKRKEQEERDSL.

As to expression, expressed widely, including gut, the amphid sheath glial cells, and head and tail neurons including AWC, ASE, and ASH. Expressed in AWC (ON) olfactory neuron but not AWC (OFF).

The protein resides in the nucleus. Functionally, transcriptional regulator which binds DNA consensus sequence 5'-CCTTAAC-3'. Plays a role in establishing and maintaining asymmetric cell fates in chemosensory AWC neurons during larval neuronal development. This is achieved by repressing the expression of multiple AWC (OFF) genes, including srsx-3 and hlh-11 in the AWC (ON) neuron. Activates expression of sox-2 in the AWC (ON) neuron. The chain is Transcription factor nsy-7 from Caenorhabditis elegans.